The sequence spans 172 residues: Large ribosomal subunit protein uL10 (172 aa).

Belongs to the universal ribosomal protein uL10 family. In terms of assembly, part of the ribosomal stalk of the 50S ribosomal subunit. The N-terminus interacts with L11 and the large rRNA to form the base of the stalk. The C-terminus forms an elongated spine to which L12 dimers bind in a sequential fashion forming a multimeric L10(L12)X complex.

Forms part of the ribosomal stalk, playing a central role in the interaction of the ribosome with GTP-bound translation factors. The chain is Large ribosomal subunit protein uL10 from Rhizobium rhizogenes (strain K84 / ATCC BAA-868) (Agrobacterium radiobacter).